The sequence spans 397 residues: DnaJ homolog subfamily A member 4 (397 aa).

A J domain is found at 4-70 (ETQYYDILGV…RDVYDQGGEQ (67 aa)). Phosphoserine is present on Ser18. The segment at 122–206 (GVTKKLALQK…CSGAKVIREK (85 aa)) adopts a CR-type zinc-finger fold. Zn(2+) is bound by residues Cys135, Cys138, Cys151, Cys154, Cys178, Cys181, Cys194, and Cys197. CXXCXGXG motif repeat units follow at residues 135–142 (CEKCEGVG), 151–158 (CPLCKGRG), 178–185 (CIECKGQG), and 194–201 (CESCSGAK). Cys394 carries the post-translational modification Cysteine methyl ester. Cys394 carries the S-farnesyl cysteine lipid modification. The propeptide at 395-397 (QTA) is removed in mature form.

It is found in the membrane. The chain is DnaJ homolog subfamily A member 4 (DNAJA4) from Homo sapiens (Human).